A 555-amino-acid chain; its full sequence is Potassium-transporting ATPase potassium-binding subunit (555 aa).

The next 10 helical transmembrane spans lie at 2-22, 60-80, 130-150, 173-193, 246-266, 278-298, 374-394, 412-432, 483-503, and 525-545; these read IWVAVIITMLLFILVAKPTGI, QYALSLVLLNGFMIVVVYFIF, IGITFLMFAAPATTLALVMAF, VFLPIAFIAALVFVALGVPQT, MSNILQMMLMMLLPTALPFTY, ILFVSLFMVFLLGFITITTSE, AGFVNIIMYAIIAVFISGLMV, LIAVTILFHPLLILGFSALAL, LVMFLGRYFSLITMLAVAASL, and GIFIGTIVIVGALTFFPMLVL.

The protein belongs to the KdpA family. In terms of assembly, the system is composed of three essential subunits: KdpA, KdpB and KdpC.

The protein resides in the cell membrane. Functionally, part of the high-affinity ATP-driven potassium transport (or Kdp) system, which catalyzes the hydrolysis of ATP coupled with the electrogenic transport of potassium into the cytoplasm. This subunit binds the extracellular potassium ions and delivers the ions to the membrane domain of KdpB through an intramembrane tunnel. In Bacillus cereus (strain G9842), this protein is Potassium-transporting ATPase potassium-binding subunit.